Here is a 102-residue protein sequence, read N- to C-terminus: uncharacterized protein (102 aa).

The next 2 helical transmembrane spans lie at 28–48 (YLNLLLILEAILCPVDSLISI) and 81–101 (LSVLYLDLCCSGLIIAEAGIG).

It localises to the membrane. This is an uncharacterized protein from Saccharomyces cerevisiae (strain ATCC 204508 / S288c) (Baker's yeast).